Consider the following 244-residue polypeptide: Salivary gland SP38-40.A protein (244 aa).

Residues 1-21 form the signal peptide; sequence MRIKFLVVLAVICLFAHYASA. 3 disordered regions span residues 23–91, 137–169, and 206–244; these read GMGG…EKKQ, PPPG…LRKE, and VQGK…DAKK. Basic and acidic residues-rich tracts occupy residues 26–86 and 157–169; these read GDKK…EVKK and PPKE…LRKE. 2 tandem repeats follow at residues 29 to 34 and 35 to 40. Residues 29-47 are 3 X 6 AA approximate tandem repeats of K-P-K-D-A-P; the sequence is KPKDAPKPKDAPKPKEVKP. The stretch at 41-47 is one 1-3; approximate repeat; it reads KPKEVKP. Repeat copies occupy residues 156-159 and 161-164. The 3 X 4 AA approximate tandem repeats of K-P-P-K stretch occupies residues 156 to 168; it reads KPPKEKPPKKLRK. The 2-3; approximate repeat unit spans residues 165–168; the sequence is KLRK. Basic residues predominate over residues 209–224; the sequence is KQKKGAKKAKGGKKAA. 3 repeat units span residues 225-228, 229-232, and 233-236. The 4 X 4 AA approximate tandem repeats of P-K-[PQ]-[GA] stretch occupies residues 225–240; the sequence is PKPGPKPGPKQADKPK. A compositionally biased stretch (basic and acidic residues) spans 235–244; sequence QADKPKDAKK. Residues 237–240 form a 3-4; approximate repeat; the sequence is DKPK.

In terms of tissue distribution, salivary gland.

It is found in the secreted. Its function is as follows. Used by the larvae to construct a supramolecular structure, the larval tube. The sequence is that of Salivary gland SP38-40.A protein (SP38-40.A) from Chironomus tentans (Midge).